The primary structure comprises 323 residues: Small ribosomal subunit protein mS35 (323 aa).

The segment at 31 to 59 (PVPTPSLPERTPGNERPPRRKALPPRTEK) is disordered. Residues 257–321 (SSERNILETL…YKESVKRLLN (65 aa)) are a coiled coil.

This sequence belongs to the mitochondrion-specific ribosomal protein mS35 family. As to quaternary structure, component of the mitochondrial small ribosomal subunit (mt-SSU). Mature mammalian 55S mitochondrial ribosomes consist of a small (28S) and a large (39S) subunit. The 28S small subunit contains a 12S ribosomal RNA (12S mt-rRNA) and 30 different proteins. The 39S large subunit contains a 16S rRNA (16S mt-rRNA), a copy of mitochondrial valine transfer RNA (mt-tRNA(Val)), which plays an integral structural role, and 52 different proteins.

The protein resides in the mitochondrion. In Homo sapiens (Human), this protein is Small ribosomal subunit protein mS35.